The sequence spans 1309 residues: MVVPGRRTVWDCVIELTKMAQENCVDPRLWASQLSSNLKFFAVELPSTELAEVIVSYICWDNNVPIVWKFLERAMALKLVSPLVVLALLADRVVPTRSTQQAAYRIYLELLKRNMFTIKDHISGPHYQKVMISVSNILRLSELFDLDTSKPGVLLVEFVFKMVSQLLDAALSDEGLLELSQDSSSQWLVKSQDMEIDAPERYNEKTGSLEKLQSLNTIMAIELIAEFLRNTVIARLLYLVSSNRASKWHEFVQKVQLLGENSSALKHSKVLNSGDLLQLISNRRFGYSYDSKVTSARKSNAIVDFGSLSSYAGLCHGASLSSLWLPLDLVFEDAMDGYQVNPTSAIEIITGLAKTLKEINGSTWHDTFLGLWIAALRLVQRERDPIEGPIPRLDTRLCMSLCIVPLVVANLIEEGKYESVMEKLRDDLVTSLQVLGDFPGLLAPPKCVVSAANKAATKAILFLSGGNVGKSCFDVINMKDMPVNCSGNMRHLIVEACIARNILDMSAYSWPGYVNGRINQIPQSLPNEVPCWSSFVKGAPLNAAMVNTLVSVPASSLAELEKLFEVAVKGSDDEKISAATVLCGASLTRGWNIQEHTVEYLTRLLSPPVPADYSRAENHLIGYACMLNVVIVGIGSVDSIQIFSLHGMVPQLACSLMPICEEFGSYTPSVSWTLPSGEAISAYSVFSNAFTLLLKLWRFNHPPIEHGVGDVPTVGSQLTPEHLLSVRNSYLVSSEILDRDRNRKRLSEVARAASCQPVFVDSFPKLKVWYRQHQRCIAATLSGLTHGSPVHQTVEALLNMTFGKVRGSQTLNPVNSGTSSSSGAASEDSNIRPEFPAWDILKAVPYVVDAALTACTHGRLSPRQLATGLKDLADFLPASLATIVSYFSAEVSRGVWKPVFMNGVDWPSPATNLSTVEEYITKILATTGVDIPSLAPGGSSPATLPLPLAAFVSLTITYKIDKASERFLNLAGPALECLAAGCPWPCMPIVASLWTQKAKRWFDFLVFSASRTVFLHNQDAVIQLLRNCFSATLGLNAAPMSNDGGVGALLGHGFGSHFYGGISPVAPGILYLRMYRALRDTVSVSEEILSLLIHSVEDIAQNRLSKEKLEKLKTVKNGSRYGQSSLATAMTQVKLAASLSASLVWLTGGLGVVHVLIKETIPSWFLSTDKSDREQGPSDLVAELRGHALAYFVVLCGALTWGVDSRSSASKRRRQAILGSHLEFIASALDGKISVGCETATWRTYISGLVSLMVSCLPLWVTEIDTEVLKSLSNGLRKWGKDELAIVLLSLGGLKTMDYAADFIIHLRS.

The tract at residues Gln809–Ser829 is disordered. The span at Ser816–Ser826 shows a compositional bias: low complexity.

It belongs to the Mediator complex subunit 33 family. Component of the Mediator complex.

The protein resides in the nucleus. Its function is as follows. Component of the Mediator complex, a coactivator involved in the regulated transcription of nearly all RNA polymerase II-dependent genes. Mediator functions as a bridge to convey information from gene-specific regulatory proteins to the basal RNA polymerase II transcription machinery. The Mediator complex, having a compact conformation in its free form, is recruited to promoters by direct interactions with regulatory proteins and serves for the assembly of a functional preinitiation complex with RNA polymerase II and the general transcription factors. Involved in the repression of phenylpropanoid biosynthesis. May compete with MED33B for common binding partners or for occupancy in Mediator. This chain is Mediator of RNA polymerase II transcription subunit 33A (MED33A), found in Arabidopsis thaliana (Mouse-ear cress).